A 168-amino-acid polypeptide reads, in one-letter code: S-ribosylhomocysteine lyase (168 aa).

The Fe cation site is built by H54, H58, and C128.

This sequence belongs to the LuxS family. Homodimer. Fe cation serves as cofactor.

The catalysed reaction is S-(5-deoxy-D-ribos-5-yl)-L-homocysteine = (S)-4,5-dihydroxypentane-2,3-dione + L-homocysteine. In terms of biological role, involved in the synthesis of autoinducer 2 (AI-2) which is secreted by bacteria and is used to communicate both the cell density and the metabolic potential of the environment. The regulation of gene expression in response to changes in cell density is called quorum sensing. Catalyzes the transformation of S-ribosylhomocysteine (RHC) to homocysteine (HC) and 4,5-dihydroxy-2,3-pentadione (DPD). The protein is S-ribosylhomocysteine lyase of Neisseria meningitidis serogroup C (strain 053442).